Reading from the N-terminus, the 156-residue chain is Endoribonuclease YbeY (156 aa).

3 residues coordinate Zn(2+): His-115, His-119, and His-125.

The protein belongs to the endoribonuclease YbeY family. Requires Zn(2+) as cofactor.

The protein localises to the cytoplasm. In terms of biological role, single strand-specific metallo-endoribonuclease involved in late-stage 70S ribosome quality control and in maturation of the 3' terminus of the 16S rRNA. The polypeptide is Endoribonuclease YbeY (Actinobacillus succinogenes (strain ATCC 55618 / DSM 22257 / CCUG 43843 / 130Z)).